Reading from the N-terminus, the 301-residue chain is NADH-cytochrome b5 reductase 3 (301 aa).

A lipid anchor (N-myristoyl glycine) is attached at Gly-2. The region spanning 40–152 is the FAD-binding FR-type domain; it reads DIKYPLRLID…RGPNGLLVYQ (113 aa). N6-acetyllysine is present on Lys-42. Tyr-43 bears the Phosphotyrosine mark. Lys-50 is subject to N6-acetyllysine. The FAD site is built by Arg-92, Pro-93, Tyr-94, Val-109, Lys-111, and Phe-114. At Lys-120 the chain carries N6-acetyllysine. 4 residues coordinate FAD: Lys-126, Met-127, Ser-128, and Thr-185.

The protein belongs to the flavoprotein pyridine nucleotide cytochrome reductase family. As to quaternary structure, component of a complex composed of cytochrome b5, NADH-cytochrome b5 reductase (CYB5R3) and MTARC2. Interacts with MTLN; the interaction is required to maintain cellular lipid composition and leads to stimulation of mitochondrial respiratory complex I activity. It depends on FAD as a cofactor. Post-translationally, myristoylated. Ubiquitously expressed. As to expression, expressed only in erythroid tissues, reticulocytes and liver.

The protein resides in the endoplasmic reticulum membrane. It is found in the mitochondrion outer membrane. The protein localises to the cytoplasm. It carries out the reaction 2 Fe(III)-[cytochrome b5] + NADH = 2 Fe(II)-[cytochrome b5] + NAD(+) + H(+). Functionally, catalyzes the reduction of two molecules of cytochrome b5 using NADH as the electron donor. In Rattus norvegicus (Rat), this protein is NADH-cytochrome b5 reductase 3.